The sequence spans 602 residues: MSSDSMRNIRNFSIIAHVDHGKSTLADRIIQLCGGLQAREMEAQVLDSNPIERERGITIKAQSVSLPYLAKDGQTYHLNFIDTPGHVDFSYEVSRSLAACEGALLVVDAAQGVEAQSVANCYTAVEQGLEVVPVINKIDLPTADIERAKAEIEAVIGIDAADAVPVSAKTGLNVQDVLEAIVHRIPPPKPRDTDKLQALIIDSWFDNYLGVVSLVRVMQGEIKAGDKLQVMSTGRNHQVDNVGVFTPKRKVLPALRAGEVGWVTASIKDVHGAPVGDTLTLAADPAPKPLPGFQEMQPRVFAGLFPVDAEDYPDLREALDKLRLNDAALRFEPESSEAMGFGFRCGFLGMLHMEIVQERLEREYNLDLISTAPTVVYEVLKTDGTIINMDNPAKLPPVNHVEEIREPIIRANVLTPEEYIGNIIKLCEEKRGSQIGINYLGSQVQISYELPMAEVVLDFFDKLKSVSRGYASLDYHFVRFDAGPFVRVDVLINGDKVDALSLIVHRSHADRRGRELCDKMKDLIPRQQFDVAIQAAVGSQIIARTTVKAMRKNVLAKCYGGDVSRKKKLLEKQKEGKKRMKQVGRVEIPQEAFLAVLQMDNK.

In terms of domain architecture, tr-type G spans 7-189 (RNIRNFSIIA…AIVHRIPPPK (183 aa)). GTP contacts are provided by residues 19-24 (DHGKST) and 136-139 (NKID).

This sequence belongs to the TRAFAC class translation factor GTPase superfamily. Classic translation factor GTPase family. LepA subfamily.

Its subcellular location is the cell inner membrane. The enzyme catalyses GTP + H2O = GDP + phosphate + H(+). Its function is as follows. Required for accurate and efficient protein synthesis under certain stress conditions. May act as a fidelity factor of the translation reaction, by catalyzing a one-codon backward translocation of tRNAs on improperly translocated ribosomes. Back-translocation proceeds from a post-translocation (POST) complex to a pre-translocation (PRE) complex, thus giving elongation factor G a second chance to translocate the tRNAs correctly. Binds to ribosomes in a GTP-dependent manner. The sequence is that of Elongation factor 4 from Stenotrophomonas maltophilia (strain R551-3).